The following is a 375-amino-acid chain: DnaJ homolog subfamily B member 12 (375 aa).

Methionine 1 bears the N-acetylmethionine mark. The Cytoplasmic segment spans residues 1 to 243 (MESNKDEAER…DRRDNQGDGG (243 aa)). The segment at 45–92 (ALIESLNQKPQTAGDQPPPTDTTHATHRKAGGTDAPSANGEAGGESTK) is disordered. The segment covering 49–58 (SLNQKPQTAG) has biased composition (polar residues). The J domain occupies 112–176 (YEILGVSRGA…RKQYDQFGDD (65 aa)). Histidine 185 carries the pros-methylhistidine modification. The chain crosses the membrane as a helical span at residues 244 to 264 (LGVFVQLMPILILILVSALSQ). Topologically, residues 265 to 375 (LMVSSPPYSL…LSEVQASLHG (111 aa)) are lumenal.

The protein belongs to the DnaJ family. DNAJB12/DNAJB14 subfamily. As to quaternary structure, homodimer and homotetramer. Interacts (via J domain) with HSPA8/Hsc70. Forms a multiprotein complex, at least composed of DNAJB12, DNAJB14, HSPA8/Hsc70 and SGTA; interaction with DNAJB14 and HSPA8/Hsc70 is direct. In terms of processing, methylated at His-185 by METTL9.

Its subcellular location is the endoplasmic reticulum membrane. The protein resides in the nucleus membrane. Its function is as follows. Acts as a co-chaperone with HSPA8/Hsc70; required to promote protein folding and trafficking, prevent aggregation of client proteins, and promote unfolded proteins to endoplasmic reticulum-associated degradation (ERAD) pathway. Acts by determining HSPA8/Hsc70's ATPase and polypeptide-binding activities. Can also act independently of HSPA8/Hsc70: together with DNAJB14, acts as a chaperone that promotes maturation of potassium channels KCND2 and KCNH2 by stabilizing nascent channel subunits and assembling them into tetramers. While stabilization of nascent channel proteins is dependent on HSPA8/Hsc70, the process of oligomerization of channel subunits is independent of HSPA8/Hsc70. When overexpressed, forms membranous structures together with DNAJB14 and HSPA8/Hsc70 within the nucleus; the role of these structures, named DJANGOs, is still unclear. Functionally, (Microbial infection) In case of infection by polyomavirus, involved in the virus endoplasmic reticulum membrane penetration and infection. The sequence is that of DnaJ homolog subfamily B member 12 from Homo sapiens (Human).